The primary structure comprises 907 residues: Chloride channel protein 2 (907 aa).

Residues 1–93 (MAAATAAAAT…RCHKFLVSRV (93 aa)) lie on the Cytoplasmic side of the membrane. Residues 22-40 (QYEQTLMYGRYTQELGAFA) form an essential for channel gating by both voltage and cell volume region. Position 26 is a phosphothreonine (Thr-26). The modulates channel gating by both voltage and cell volume stretch occupies residues 42–55 (EEAARIRLGGPEPW). 2 helical membrane-spanning segments follow: residues 94–127 (GEDWIFLVLLGLLMALVSWAMDYAIAVCLQAQQW) and 136–161 (ILLQYLAWVTYPVVLITFSAGFTQIL). The Selectivity filter part_1 signature appears at 167–171 (GSGIP). The helical intramembrane region spans 170 to 177 (IPEMKTIL). The next 2 membrane-spanning stretches (helical) occupy residues 186–204 (LTLKTFVAKVIGLTCALGS) and 211–229 (EGPFVHIASMCAALLSKFL). A Selectivity filter part_2 motif is present at residues 209-213 (GKEGP). 2 consecutive intramembrane regions (helical) follow at residues 245-257 (MLAAACAVGVGCC) and 261-269 (PIGGVLFSI). Helical transmembrane passes span 281-301 (YWRGFFAATFSAFIFRVLAVW), 327-355 (LPAFAVIGIASGFGGALFVYLNRKIVQVM), 364-383 (FLMKKRLLFPALVTLLISTL), 435-455 (ANVFLTLVIFILMKFWMSALA), and 463-486 (GAFMPVFVIGAAFGRLVGESMAAW). A Selectivity filter part_3 motif is present at residues 463 to 467 (GAFMP). Positions 503–517 (GGYAVVGAAALAGAV) form an intramembrane region, helical. The note=Loop between two helices intramembrane region spans 518-519 (TH). Residues 520–531 (TVSTAVIVFELT) constitute an intramembrane region (helical). Positions 532–536 (GQIAH) form an intramembrane region, note=Loop between two helices. A helical membrane pass occupies residues 537 to 554 (ILPVMIAVILANAVAQSL). The Cytoplasmic segment spans residues 555–907 (QPSLYDSIIR…TPSDSDDKCQ (353 aa)). A CBS 1 domain is found at 590–648 (MVRDVPHVALSCTFRDLRLALHRTKGRMLALVESPESMILLGSIERSQVVALLGAQLSP). Residues 650–660 (RRRQHMQKLRK) are compositionally biased toward basic residues. The segment at 650–720 (RRRQHMQKLR…NATSLQEGTT (71 aa)) is disordered. The span at 664–678 (SPPSDQESPPSSETS) shows a compositional bias: low complexity. Residues 696 to 705 (QTHKPLKPAL) are compositionally biased toward basic residues. Residues 710–720 (SNATSLQEGTT) are compositionally biased toward polar residues. Ser-767 is modified (phosphoserine). The 61-residue stretch at 799 to 859 (IDPAPFQLVE…GSVTAQGVKV (61 aa)) folds into the CBS 2 domain. A Basolateral membrane sorting motif is present at residues 821-822 (LL). Positions 865 to 907 (SFRDSATSSSDTETTEVHALWGPRSRHGLPREGTPSDSDDKCQ) are disordered.

The protein belongs to the chloride channel (TC 2.A.49) family. ClC-2/CLCN2 subfamily. Homodimer. Interacts with auxiliary subunit HEPACAM. Post-translationally, phosphorylated. Activated by dephosphorylation. In terms of tissue distribution, ubiquitously expressed. Expressed in neurons and glial cells (at protein level).

It localises to the cell membrane. It is found in the basolateral cell membrane. The protein localises to the cell projection. Its subcellular location is the dendritic spine membrane. The protein resides in the axon. The enzyme catalyses chloride(in) = chloride(out). It catalyses the reaction thiocyanate(in) = thiocyanate(out). The catalysed reaction is bromide(in) = bromide(out). It carries out the reaction nitrate(in) = nitrate(out). The enzyme catalyses iodide(out) = iodide(in). Its activity is regulated as follows. Common gate kinetics are down-regulated by intracellular ATP. Inhibited by AK-42, a derivative of meclofenamate. Inhibited by Cd(2+). Inhibited by Zn(2+) and PKC activation. Inhibited at acidic pH. CCLN2:HEPACAM channel conductance is up-regulated upon hypo-osmolarity. Voltage-gated and osmosensitive chloride channel. Forms a homodimeric channel where each subunit has its own ion conduction pathway. Conducts double-barreled currents controlled by two types of gates, two fast glutamate gates that control each subunit independently and a slow common gate that opens and shuts off both subunits simultaneously. Displays inward rectification currents activated upon membrane hyperpolarization and extracellular hypotonicity. Contributes to chloride conductance involved in neuron excitability. In hippocampal neurons, generates a significant part of resting membrane conductance and provides an additional chloride efflux pathway to prevent chloride accumulation in dendrites upon GABA receptor activation. In glia, associates with the auxiliary subunit HEPACAM/GlialCAM at astrocytic processes and myelinated fiber tracts where it may regulate transcellular chloride flux buffering extracellular chloride and potassium concentrations. Regulates aldosterone production in adrenal glands. The opening of CLCN2 channels at hyperpolarized membrane potentials in the glomerulosa causes cell membrane depolarization, activation of voltage-gated calcium channels and increased expression of aldosterone synthase, the rate-limiting enzyme for aldosterone biosynthesis. Contributes to chloride conductance in retinal pigment epithelium involved in phagocytosis of shed photoreceptor outer segments and photoreceptor renewal. Conducts chloride currents at the basolateral membrane of epithelial cells with a role in chloride reabsorption rather than secretion. Permeable to small monovalent anions with chloride &gt; thiocyanate &gt; bromide &gt; nitrate &gt; iodide ion selectivity. The polypeptide is Chloride channel protein 2 (Clcn2) (Rattus norvegicus (Rat)).